The sequence spans 84 residues: Large ribosomal subunit protein bL27 (84 aa).

Residues 1 to 22 form a disordered region; the sequence is MAHKKAGGSTRNGRDSESKRLG.

It belongs to the bacterial ribosomal protein bL27 family.

This chain is Large ribosomal subunit protein bL27, found in Shewanella oneidensis (strain ATCC 700550 / JCM 31522 / CIP 106686 / LMG 19005 / NCIMB 14063 / MR-1).